Here is a 126-residue protein sequence, read N- to C-terminus: MAILGLGTDIVEIARIESVIARSGERLARRVLSDNEWEIWKTHHQPVRFLAKRFAVKEAAAKAFGTGIRNGLAFNQFEVFNDELGKPRLRLWGEALKLAEKLGVVNMHVTLADERHYACATVIIES.

Mg(2+) is bound by residues D9 and E58.

It belongs to the P-Pant transferase superfamily. AcpS family. Mg(2+) serves as cofactor.

It localises to the cytoplasm. The enzyme catalyses apo-[ACP] + CoA = holo-[ACP] + adenosine 3',5'-bisphosphate + H(+). In terms of biological role, transfers the 4'-phosphopantetheine moiety from coenzyme A to a Ser of acyl-carrier-protein. In Escherichia fergusonii (strain ATCC 35469 / DSM 13698 / CCUG 18766 / IAM 14443 / JCM 21226 / LMG 7866 / NBRC 102419 / NCTC 12128 / CDC 0568-73), this protein is Holo-[acyl-carrier-protein] synthase.